The sequence spans 304 residues: Opsin-1 (304 aa).

Residues Met-1–Arg-45 lie on the Extracellular side of the membrane. A helical membrane pass occupies residues Thr-46 to Trp-66. The chain crosses the membrane as a helical span at residues Leu-74–Ala-94. Residues Tyr-129–Val-149 traverse the membrane as a helical segment. A helical transmembrane segment spans residues Thr-154–Gly-174. A helical transmembrane segment spans residues Trp-183–His-203. The chain crosses the membrane as a helical span at residues Phe-219–Ile-239. A helical transmembrane segment spans residues Ile-252–Leu-272. At Lys-263 the chain carries N6-(retinylidene)lysine. The Cytoplasmic portion of the chain corresponds to Ser-273 to Asp-304.

This sequence belongs to the archaeal/bacterial/fungal opsin family. Binds all-trans retinal via a protonated Schiff base linkage.

The protein localises to the membrane. Its function is as follows. Could facilitate a sensory photoresponse. The chain is Opsin-1 (nop-1) from Neurospora crassa (strain ATCC 24698 / 74-OR23-1A / CBS 708.71 / DSM 1257 / FGSC 987).